Reading from the N-terminus, the 497-residue chain is Aspartyl/glutamyl-tRNA(Asn/Gln) amidotransferase subunit B (497 aa).

This sequence belongs to the GatB/GatE family. GatB subfamily. Heterotrimer of A, B and C subunits.

The enzyme catalyses L-glutamyl-tRNA(Gln) + L-glutamine + ATP + H2O = L-glutaminyl-tRNA(Gln) + L-glutamate + ADP + phosphate + H(+). It carries out the reaction L-aspartyl-tRNA(Asn) + L-glutamine + ATP + H2O = L-asparaginyl-tRNA(Asn) + L-glutamate + ADP + phosphate + 2 H(+). Its function is as follows. Allows the formation of correctly charged Asn-tRNA(Asn) or Gln-tRNA(Gln) through the transamidation of misacylated Asp-tRNA(Asn) or Glu-tRNA(Gln) in organisms which lack either or both of asparaginyl-tRNA or glutaminyl-tRNA synthetases. The reaction takes place in the presence of glutamine and ATP through an activated phospho-Asp-tRNA(Asn) or phospho-Glu-tRNA(Gln). The polypeptide is Aspartyl/glutamyl-tRNA(Asn/Gln) amidotransferase subunit B (Rhodopirellula baltica (strain DSM 10527 / NCIMB 13988 / SH1)).